Here is a 360-residue protein sequence, read N- to C-terminus: Phosphoserine aminotransferase (360 aa).

Position 43 (Arg43) interacts with L-glutamate. Pyridoxal 5'-phosphate-binding positions include 77–78, Trp103, Thr152, Asp172, and Gln195; that span reads AS. Lys196 bears the N6-(pyridoxal phosphate)lysine mark. 237–238 is a binding site for pyridoxal 5'-phosphate; the sequence is NT.

It belongs to the class-V pyridoxal-phosphate-dependent aminotransferase family. SerC subfamily. Homodimer. Pyridoxal 5'-phosphate is required as a cofactor.

The protein localises to the cytoplasm. It carries out the reaction O-phospho-L-serine + 2-oxoglutarate = 3-phosphooxypyruvate + L-glutamate. The enzyme catalyses 4-(phosphooxy)-L-threonine + 2-oxoglutarate = (R)-3-hydroxy-2-oxo-4-phosphooxybutanoate + L-glutamate. Its pathway is amino-acid biosynthesis; L-serine biosynthesis; L-serine from 3-phospho-D-glycerate: step 2/3. It functions in the pathway cofactor biosynthesis; pyridoxine 5'-phosphate biosynthesis; pyridoxine 5'-phosphate from D-erythrose 4-phosphate: step 3/5. Functionally, catalyzes the reversible conversion of 3-phosphohydroxypyruvate to phosphoserine and of 3-hydroxy-2-oxo-4-phosphonooxybutanoate to phosphohydroxythreonine. This chain is Phosphoserine aminotransferase, found in Syntrophobacter fumaroxidans (strain DSM 10017 / MPOB).